Here is a 221-residue protein sequence, read N- to C-terminus: Ribose-5-phosphate isomerase A (221 aa).

Substrate is bound by residues 26–29 (TGST), 81–84 (DGAD), and 94–97 (KGGG). Catalysis depends on glutamate 103, which acts as the Proton acceptor. Lysine 121 is a binding site for substrate.

The protein belongs to the ribose 5-phosphate isomerase family. Homodimer.

It catalyses the reaction aldehydo-D-ribose 5-phosphate = D-ribulose 5-phosphate. The protein operates within carbohydrate degradation; pentose phosphate pathway; D-ribose 5-phosphate from D-ribulose 5-phosphate (non-oxidative stage): step 1/1. In terms of biological role, catalyzes the reversible conversion of ribose-5-phosphate to ribulose 5-phosphate. The protein is Ribose-5-phosphate isomerase A of Bacillus mycoides (strain KBAB4) (Bacillus weihenstephanensis).